We begin with the raw amino-acid sequence, 272 residues long: Indole-3-glycerol phosphate synthase (272 aa).

Belongs to the TrpC family.

It catalyses the reaction 1-(2-carboxyphenylamino)-1-deoxy-D-ribulose 5-phosphate + H(+) = (1S,2R)-1-C-(indol-3-yl)glycerol 3-phosphate + CO2 + H2O. Its pathway is amino-acid biosynthesis; L-tryptophan biosynthesis; L-tryptophan from chorismate: step 4/5. The protein is Indole-3-glycerol phosphate synthase of Mycobacterium sp. (strain JLS).